The chain runs to 515 residues: MNGAQALINTLVDGGVDVCFANPGTSEMHFVAALDAVPRMRGMLTLFEGVATGAADGYARIAGRPAAVLLHLGPGLGNGLANLHNARRARVPMVVVVGDHATYHKKYDAPLESDIDAVAGTVSGWVRRTEAAADVGADAEAAIAASRSGSQIATLILPADVCWSDGAHAAAGVPAQAAAAPVDVGPVAGVLRSGEPAMMLIGGDATRGPGLTAAARIVQATGARWLCETFPTCLERGAGIPAVERLAYFAEGAAAQLDGVKHLVLAGARSPVSFFAYPGMPSDLVPAGCEVHVLAEPGGAADALAALADEVAPGTVAPVAGASRPQLPTGDLTSVSAADVVGALLPERAIVVDESNTCGVLLPQATAGAPAHDWLTLTGGAIGYGIPAAVGAAVAAPDRPVLCLESDGSAMYTISGLWSQARENLDVTTVIYNNGAYDILRIELQRVGAGSDPGPKALDLLDISRPTMDFVKIAEGMGVPARRVTTCEEFADALRAAFAEPGPHLIDVVVPSLVG.

Glu48 contacts thiamine diphosphate. FAD-binding positions include 249–269 (FAEG…AGAR) and 283–302 (DLVP…GAAD). Positions 357-436 (TCGVLLPQAT…VTTVIYNNGA (80 aa)) are thiamine pyrophosphate binding. Mg(2+) is bound by residues Asp407 and Asn434.

This sequence belongs to the TPP enzyme family. Heterodimer of large catalytic subunit and small regulatory subunit. Mg(2+) serves as cofactor. The cofactor is thiamine diphosphate.

The catalysed reaction is 2 pyruvate + H(+) = (2S)-2-acetolactate + CO2. Its pathway is amino-acid biosynthesis; L-isoleucine biosynthesis; L-isoleucine from 2-oxobutanoate: step 1/4. The protein operates within amino-acid biosynthesis; L-valine biosynthesis; L-valine from pyruvate: step 1/4. In terms of biological role, catalyzes the conversion of 2 pyruvate molecules into acetolactate in the first common step of the biosynthetic pathway of the branched-amino acids such as leucine, isoleucine, and valine. The sequence is that of Putative acetolactate synthase large subunit IlvX (ilvX) from Mycobacterium tuberculosis (strain ATCC 25618 / H37Rv).